Reading from the N-terminus, the 397-residue chain is Elongation factor Tu (397 aa).

The tr-type G domain occupies 10–207; sequence KPHVNVGTIG…TLDAYIPEPE (198 aa). The G1 stretch occupies residues 19–26; the sequence is GHVDHGKT. Position 19 to 26 (19 to 26) interacts with GTP; sequence GHVDHGKT. Residue Thr-26 participates in Mg(2+) binding. The G2 stretch occupies residues 60–64; it reads GITIA. Positions 81-84 are G3; sequence DCPG. GTP-binding positions include 81–85 and 136–139; these read DCPGH and NKAD. The interval 136–139 is G4; the sequence is NKAD. The G5 stretch occupies residues 174–176; the sequence is SAL.

It belongs to the TRAFAC class translation factor GTPase superfamily. Classic translation factor GTPase family. EF-Tu/EF-1A subfamily. In terms of assembly, monomer.

It is found in the cytoplasm. The catalysed reaction is GTP + H2O = GDP + phosphate + H(+). In terms of biological role, GTP hydrolase that promotes the GTP-dependent binding of aminoacyl-tRNA to the A-site of ribosomes during protein biosynthesis. This is Elongation factor Tu from Hahella chejuensis (strain KCTC 2396).